Consider the following 153-residue polypeptide: MENYCKIVAQNRKAKFNYFIEDKMEAGIVLQGSELKSIRSGKVSIEDSYAAESSNEIFLYNSYIGEYKQANRFNHVPRRVRKLLLHRKEIQKIIGKLSVQGCTLVALSIYFNSKNKVKVELGLAKGKKQYDKRYAIKEQEWKKQQARIMRNKF.

Belongs to the SmpB family.

The protein resides in the cytoplasm. In terms of biological role, required for rescue of stalled ribosomes mediated by trans-translation. Binds to transfer-messenger RNA (tmRNA), required for stable association of tmRNA with ribosomes. tmRNA and SmpB together mimic tRNA shape, replacing the anticodon stem-loop with SmpB. tmRNA is encoded by the ssrA gene; the 2 termini fold to resemble tRNA(Ala) and it encodes a 'tag peptide', a short internal open reading frame. During trans-translation Ala-aminoacylated tmRNA acts like a tRNA, entering the A-site of stalled ribosomes, displacing the stalled mRNA. The ribosome then switches to translate the ORF on the tmRNA; the nascent peptide is terminated with the 'tag peptide' encoded by the tmRNA and targeted for degradation. The ribosome is freed to recommence translation, which seems to be the essential function of trans-translation. In Orientia tsutsugamushi (strain Ikeda) (Rickettsia tsutsugamushi), this protein is SsrA-binding protein.